A 148-amino-acid chain; its full sequence is MLVKTISRTIESESGFLQPTLDVIATLPADDRSKKIPISLVVGFKQEASLNSSSSLSCYYYAIPLMRDRHINLKSGGSNVVGIPLLDTKDDRIRDMARHMATIISERFNRPCYVTWSSLPSEDPSMLVANHLYILKKCLDLLKTELGE.

This sequence belongs to the PSMG4 family. Component of the 20S proteasome chaperone. Forms a heterodimer with IRC25 that binds to proteasome precursors. Interacts with POP2.

The protein localises to the cytoplasm. Involved in 20S proteasome assembly, facilitating the alpha-ring formation. Involved in maintenance of telomere length. The sequence is that of Proteasome chaperone 4 (POC4) from Saccharomyces cerevisiae (strain ATCC 204508 / S288c) (Baker's yeast).